The chain runs to 147 residues: Hemoglobin subunit beta (147 aa).

Val2 bears the N-acetylvaline mark. Residues His3–His147 enclose the Globin domain. Thr13 carries the phosphothreonine modification. Ser45 carries the post-translational modification Phosphoserine. Lys60 bears the N6-acetyllysine mark. His64 provides a ligand contact to heme b. N6-acetyllysine is present on Lys83. His93 provides a ligand contact to heme b. Cys94 bears the S-nitrosocysteine mark. N6-acetyllysine is present on Lys145.

This sequence belongs to the globin family. In terms of assembly, heterotetramer of two alpha chains and two beta chains. Red blood cells.

Functionally, involved in oxygen transport from the lung to the various peripheral tissues. This chain is Hemoglobin subunit beta (HBB), found in Rhinolophus ferrumequinum (Greater horseshoe bat).